We begin with the raw amino-acid sequence, 274 residues long: Large ribosomal subunit protein uL2 (274 aa).

The disordered stretch occupies residues 225-274 (MNPVDHPHGGGEGRSPIGRHPVTPWGKPTLGVKTRKKNKASSKLIIKRRK). A compositionally biased stretch (basic residues) spans 257 to 274 (KTRKKNKASSKLIIKRRK).

This sequence belongs to the universal ribosomal protein uL2 family. Part of the 50S ribosomal subunit. Forms a bridge to the 30S subunit in the 70S ribosome.

Its function is as follows. One of the primary rRNA binding proteins. Required for association of the 30S and 50S subunits to form the 70S ribosome, for tRNA binding and peptide bond formation. It has been suggested to have peptidyltransferase activity; this is somewhat controversial. Makes several contacts with the 16S rRNA in the 70S ribosome. The protein is Large ribosomal subunit protein uL2 of Carboxydothermus hydrogenoformans (strain ATCC BAA-161 / DSM 6008 / Z-2901).